We begin with the raw amino-acid sequence, 340 residues long: N-acetyl-gamma-glutamyl-phosphate reductase (340 aa).

Residue cysteine 151 is part of the active site.

It belongs to the NAGSA dehydrogenase family. Type 1 subfamily.

It localises to the cytoplasm. The catalysed reaction is N-acetyl-L-glutamate 5-semialdehyde + phosphate + NADP(+) = N-acetyl-L-glutamyl 5-phosphate + NADPH + H(+). The protein operates within amino-acid biosynthesis; L-arginine biosynthesis; N(2)-acetyl-L-ornithine from L-glutamate: step 3/4. In terms of biological role, catalyzes the NADPH-dependent reduction of N-acetyl-5-glutamyl phosphate to yield N-acetyl-L-glutamate 5-semialdehyde. The polypeptide is N-acetyl-gamma-glutamyl-phosphate reductase (Aquifex aeolicus (strain VF5)).